The sequence spans 298 residues: Mimecan (298 aa).

A signal peptide spans 1-20; sequence MKTLQSTLLLLLFVPLIKPA. Residue asparagine 88 is glycosylated (N-linked (GlcNAc...) (keratan sulfate) asparagine). LRR repeat units follow at residues 112-131, 132-155, 156-179, 180-199, 200-225, 226-246, and 247-277; these read DAVP…FNKI, KKLT…GNLI, EDIE…ENQL, LKLP…YNKI, KSRG…HNAL, ESVP…FNNI, and ASIT…GNPI. Asparagine 214 is a glycosylation site (N-linked (GlcNAc...) (keratan sulfate) asparagine). Cysteine 255 and cysteine 288 are joined by a disulfide. Residue asparagine 258 is glycosylated (N-linked (GlcNAc...) (keratan sulfate) asparagine).

Belongs to the small leucine-rich proteoglycan (SLRP) family. SLRP class III subfamily. Post-translationally, contains keratan sulfate.

It is found in the secreted. Its subcellular location is the extracellular space. It localises to the extracellular matrix. Its function is as follows. Induces bone formation in conjunction with TGF-beta-1 or TGF-beta-2. The polypeptide is Mimecan (OGN) (Pongo abelii (Sumatran orangutan)).